The following is a 324-amino-acid chain: tRNA-modifying protein YgfZ (324 aa).

Trp-184 is a binding site for folate.

The protein belongs to the tRNA-modifying YgfZ family.

Its subcellular location is the cytoplasm. Folate-binding protein involved in regulating the level of ATP-DnaA and in the modification of some tRNAs. It is probably a key factor in regulatory networks that act via tRNA modification, such as initiation of chromosomal replication. This chain is tRNA-modifying protein YgfZ, found in Vibrio vulnificus (strain CMCP6).